The chain runs to 786 residues: Diamine oxidase [copper-containing] 1, peroxisomal (786 aa).

419 to 430 provides a ligand contact to substrate; sequence AFDAGEDGLGKN. The active-site Proton acceptor is D421. The cysteines at positions 440 and 466 are disulfide-linked. 502–507 lines the substrate pocket; the sequence is VANYEY. The active-site Schiff-base intermediate with substrate; via topaquinone is Y505. The residue at position 505 (Y505) is a 2',4',5'-topaquinone. Cu cation is bound by residues H555 and H557. Residues D710 and I711 each coordinate Mn(2+). H721 contacts Cu cation.

This sequence belongs to the copper/topaquinone oxidase family. In terms of assembly, homodimer. Requires Cu cation as cofactor. Zn(2+) is required as a cofactor. The cofactor is L-topaquinone. Topaquinone (TPQ) is generated by copper-dependent autoxidation of a specific tyrosyl residue. In terms of tissue distribution, mainly expressed in roots, and, to a lower extent, in leaves and stems.

The protein localises to the peroxisome. The catalysed reaction is a primary methyl amine + O2 + H2O = an aldehyde + H2O2 + NH4(+). The enzyme catalyses N-methylputrescine + O2 + H2O = 4-methylaminobutanal + H2O2 + NH4(+). The protein operates within alkaloid biosynthesis; nicotine biosynthesis. Its pathway is amine and polyamine degradation; putrescine degradation. In terms of biological role, involved in putrescine catabolism in peroxisomes. May also be involved in the biosynthesis of pyridine alkaloid natural products, leading mainly to the production of anabasine, anatabine, nicotine and nornicotine, effective deterrents against herbivores with antiparasitic and pesticide properties (neurotoxins); nornicotine serves as the precursor in the synthesis of the carcinogen compound N'-nitrosonornicotine (NNN). Oxidizes preferentially non-N-methylated amines. The sequence is that of Diamine oxidase [copper-containing] 1, peroxisomal from Nicotiana tabacum (Common tobacco).